Consider the following 237-residue polypeptide: Ribonuclease PH (237 aa).

Residues arginine 86 and 124-126 (GTR) contribute to the phosphate site.

This sequence belongs to the RNase PH family. Homohexameric ring arranged as a trimer of dimers.

The catalysed reaction is tRNA(n+1) + phosphate = tRNA(n) + a ribonucleoside 5'-diphosphate. In terms of biological role, phosphorolytic 3'-5' exoribonuclease that plays an important role in tRNA 3'-end maturation. Removes nucleotide residues following the 3'-CCA terminus of tRNAs; can also add nucleotides to the ends of RNA molecules by using nucleoside diphosphates as substrates, but this may not be physiologically important. Probably plays a role in initiation of 16S rRNA degradation (leading to ribosome degradation) during starvation. The chain is Ribonuclease PH from Bradyrhizobium sp. (strain BTAi1 / ATCC BAA-1182).